A 488-amino-acid chain; its full sequence is GTPase Der (488 aa).

EngA-type G domains follow at residues 3 to 166 (PVIA…PRDP) and 193 to 366 (IKIA…MSAV). GTP is bound by residues 9–16 (GRPNVGKS), 56–60 (DTGGI), 118–121 (NKID), 199–206 (GRPNVGKS), 246–250 (DTAGV), and 311–314 (NKWD). Residues 367–451 (TRWPTSRLTQ…PIRIEYKGGD (85 aa)) enclose the KH-like domain. Basic and acidic residues predominate over residues 449-461 (GGDNPFEGKKNTL). Positions 449 to 488 (GGDNPFEGKKNTLTDRQVNKKRRLMSHHKKAEKKRRDKRK) are disordered. Positions 467–488 (NKKRRLMSHHKKAEKKRRDKRK) are enriched in basic residues.

The protein belongs to the TRAFAC class TrmE-Era-EngA-EngB-Septin-like GTPase superfamily. EngA (Der) GTPase family. Associates with the 50S ribosomal subunit.

GTPase that plays an essential role in the late steps of ribosome biogenesis. This is GTPase Der from Pseudomonas entomophila (strain L48).